A 184-amino-acid chain; its full sequence is Der GTPase-activating protein YihI (184 aa).

Disordered stretches follow at residues 1 to 106 and 159 to 184; these read MNRP…PTMS and LGDDDEEEQQEDMLQLLKRNNPKDAL. Basic and acidic residues predominate over residues 8 to 32; it reads VADKAEKSKVKRKTREELEREARER. Over residues 159–169 the composition is skewed to acidic residues; sequence LGDDDEEEQQE.

It belongs to the YihI family. As to quaternary structure, interacts with Der.

In terms of biological role, a GTPase-activating protein (GAP) that modifies Der/EngA GTPase function. May play a role in ribosome biogenesis. This chain is Der GTPase-activating protein YihI, found in Pectobacterium atrosepticum (strain SCRI 1043 / ATCC BAA-672) (Erwinia carotovora subsp. atroseptica).